The chain runs to 631 residues: MSKMGSSSMGELQDGITQEDSIEKKSKNVASHGEKRKVKRKKEDLSMDGSNDGVKDSPDSNDDSQSKKKKKKKLKKSQQPLNEENYPRLQTTENNLQKPLKISDLQELVFWCLADGQAPSWVLVRNKQMIHRAVILLVPGLEPSQFGFQPVRGNKHSFLLPNLLNENGPIQLPDFCEVFDRAWPTRSPGDRFRVFSPVNAFLQSPLSNEQKKKRDKETRAMASFSKPSDYLMSYESFIEDEYPLHPTVMKGEEVTQPSGWVASAGDFHSPPINPKILAIDCEMVRTENGLEIARVTIVDMKSEVIYDEFVKPESPVTDYVTQYSGITEEKLRNVTTVLSDVQSYLKKTVDNNTVLLGHSLNSDLNCLKFTHPHIIDTANIYNHTRGPPSKPSLKWLATKWLRREIQKAGALGHDSAEDALACVDLLKLKVKNGPAFGLFNQDFESIFHRLSRQQPTPLIGAIADYGNPESCIGKAAHKSVSCANDDEVVSAVVSLSDMHNFVWGRFRELEHAAMWNANRNTKQENNSDTDTENDSVEEDQVTSYSSALERFNRRIRLLYDSLPKGSLLLLYTGTGNPIEMSKLNAIRQQFRKEYQTKKWDELSVKWTDEENMKYISAVENTRNGLSFMTIK.

Residues 1 to 19 (MSKMGSSSMGELQDGITQE) show a composition bias toward polar residues. Residues 1 to 92 (MSKMGSSSMG…EENYPRLQTT (92 aa)) form a disordered region. Residues 67-76 (KKKKKKKLKK) show a composition bias toward basic residues. The region spanning 277–426 (LAIDCEMVRT…EDALACVDLL (150 aa)) is the Exonuclease domain. The span at 517 to 526 (ANRNTKQENN) shows a compositional bias: polar residues. The disordered stretch occupies residues 517–540 (ANRNTKQENNSDTDTENDSVEEDQ). The span at 527-540 (SDTDTENDSVEEDQ) shows a compositional bias: acidic residues.

The protein belongs to the REXO1/REXO3 family.

Its subcellular location is the nucleus. This is an uncharacterized protein from Schizosaccharomyces pombe (strain 972 / ATCC 24843) (Fission yeast).